The following is a 502-amino-acid chain: UDP-N-acetylmuramoylalanine--D-glutamate ligase (502 aa).

Gly-129 to Thr-135 lines the ATP pocket.

Belongs to the MurCDEF family.

The protein resides in the cytoplasm. It carries out the reaction UDP-N-acetyl-alpha-D-muramoyl-L-alanine + D-glutamate + ATP = UDP-N-acetyl-alpha-D-muramoyl-L-alanyl-D-glutamate + ADP + phosphate + H(+). The protein operates within cell wall biogenesis; peptidoglycan biosynthesis. Its function is as follows. Cell wall formation. Catalyzes the addition of glutamate to the nucleotide precursor UDP-N-acetylmuramoyl-L-alanine (UMA). In Burkholderia ambifaria (strain MC40-6), this protein is UDP-N-acetylmuramoylalanine--D-glutamate ligase.